We begin with the raw amino-acid sequence, 696 residues long: Probable glutamine--fructose-6-phosphate aminotransferase [isomerizing] (696 aa).

Cys2 serves as the catalytic For GATase activity. The 302-residue stretch at 2–303 folds into the Glutamine amidotransferase type-2 domain; that stretch reads CGIFGYINYL…DDDIAHVRDG (302 aa). 2 consecutive SIS domains span residues 375–514 and 547–686; these read YYDI…DSVS and AIEQ…VDQP.

The enzyme catalyses D-fructose 6-phosphate + L-glutamine = D-glucosamine 6-phosphate + L-glutamate. The protein operates within nucleotide-sugar biosynthesis; UDP-N-acetyl-alpha-D-glucosamine biosynthesis; alpha-D-glucosamine 6-phosphate from D-fructose 6-phosphate: step 1/1. Involved in amino sugar synthesis (formation of chitin, supplies the amino sugars of asparagine-linked oligosaccharides of glycoproteins). The polypeptide is Probable glutamine--fructose-6-phosphate aminotransferase [isomerizing] (Schizosaccharomyces pombe (strain 972 / ATCC 24843) (Fission yeast)).